An 84-amino-acid chain; its full sequence is Putative membrane protein insertion efficiency factor (84 aa).

Residues 60-84 (WSQPGEDPVPDHFSLKRNDTRKQSH) form a disordered region. Basic and acidic residues predominate over residues 68–84 (VPDHFSLKRNDTRKQSH).

The protein belongs to the UPF0161 family.

Its subcellular location is the cell membrane. Could be involved in insertion of integral membrane proteins into the membrane. In Streptococcus gordonii (strain Challis / ATCC 35105 / BCRC 15272 / CH1 / DL1 / V288), this protein is Putative membrane protein insertion efficiency factor.